Reading from the N-terminus, the 134-residue chain is MIELDYVKGEDTIVEATSTSPWLMRSPLARAAEKRGSGLFFDINEGHGQHRDVIVAYGVSKPKRRSPHPHGNKAADKRKTTEKEPERKKRVGAPRTCKKICIQLLYRFNFTVLGIGNVCNIDLLLGTVSATNAI.

Residues 59–92 are disordered; sequence VSKPKRRSPHPHGNKAADKRKTTEKEPERKKRVG. Positions 61–71 are enriched in basic residues; sequence KPKRRSPHPHG. Residues 73 to 87 are compositionally biased toward basic and acidic residues; it reads KAADKRKTTEKEPER.

This is an uncharacterized protein from Saccharomyces cerevisiae (strain ATCC 204508 / S288c) (Baker's yeast).